A 78-amino-acid chain; its full sequence is uncharacterized protein (78 aa).

The N-terminal stretch at 1-27 (MQNSKTDMCAALWAVTGLVLNVAVRFA) is a signal peptide.

This is an uncharacterized protein from Dryophytes versicolor (chameleon treefrog).